Consider the following 1100-residue polypeptide: Sorbin and SH3 domain-containing protein 2 (1100 aa).

Tyr13, Ser14, His27, Gly28, Ser30, and Ser43 each carry phosphoserine. A compositionally biased stretch (polar residues) spans 30–52 (SLDSTDTYPQHAQSLDGTTSSSI). The segment at 30 to 57 (SLDSTDTYPQHAQSLDGTTSSSIPLYRS) is disordered. In terms of domain architecture, SoHo spans 66 to 127 (VIKAPHYPGI…YNTPYTYNAG (62 aa)). The span at 134–147 (SAQSHPAAKTQTYR) shows a compositional bias: polar residues. Residues 134–311 (SAQSHPAAKT…SPSRAKGGDD (178 aa)) form a disordered region. At His153 the chain carries Alanine amide. Ser154 and Ser157 each carry phosphoserine. Residues 167–180 (PVPPPHVPPPVPPL) show a composition bias toward pro residues. The span at 181–217 (RPRDRSSTEKHDWDPPDRKVDTRKFRSEPRSIFEYEP) shows a compositional bias: basic and acidic residues. Residues Ser234 and Ile236 each carry the phosphothreonine modification. Residues Ser239, Ser245, Ser248, Lys258, Ser259, and Glu260 each carry the phosphoserine modification. Phosphothreonine is present on residues Thr277, Gly280, and Val282. Ser287 bears the Phosphoserine mark. A compositionally biased stretch (low complexity) spans 287 to 304 (SSTTLTKSFTSSSPSSPS). At Thr292 the chain carries Phosphothreonine. Phosphoserine is present on residues Phe295, Ser297, Ser298, Ser299, Ser301, Ser302, Ser304, Ala306, Asp311, and Pro316. Phosphothreonine is present on residues Ser320, Ser322, and Gly326. A phosphoserine mark is found at His341, Val344, and Arg346. Glu366 is subject to Phosphothreonine. Residues Ser381 and Ser383 each carry the phosphoserine modification. Residues Asp413 and Lys415 each carry the phosphothreonine modification. A phosphoserine mark is found at Arg437 and Arg439. Ile459 carries the phosphothreonine modification. Phosphoserine occurs at positions 474, 494, 497, 550, and 750. The segment at 807–866 (RMPRSASFQDVDTANSSCHHQDRGGALQDRESPRSYSSTLTDMGRSAPRERRGTPEKEKL) is disordered. Polar residues predominate over residues 812 to 824 (ASFQDVDTANSSC). Basic and acidic residues predominate over residues 825 to 839 (HHQDRGGALQDRESP). At Ser843 the chain carries Phosphoserine. The span at 853–866 (APRERRGTPEKEKL) shows a compositional bias: basic and acidic residues. 2 consecutive SH3 domains span residues 863 to 922 (KEKL…KLTP) and 938 to 999 (GEIG…VVKK). Phosphoserine occurs at positions 1017 and 1023. An SH3 3 domain is found at 1041-1100 (GGGEPFQALYNYTPRNEDELELRESDVIDVMEKCDDGWFVGTSRRTKFFGTFPGNYVKRL).

As to quaternary structure, interacts with ABL, CBL, DNM1, DNM2, FLOT1, AFDN, PTK2B/PYK2, SAPAP, SPTAN1, SYNJ1, SYNJ2, VCL/vinculin and WASF. Interacts with ABL1/c-Abl, ABL2/v-Abl/Arg, ACTN, CBL and PALLD. Interacts with PTPN12 and WASF1 via its SH3 domains; this interaction may mediate the partial PTPN12 and WASF1 translocation to focal adhesion sites. In terms of processing, ubiquitinated by CBL. Dephosphorylated by PTPN12. In terms of tissue distribution, abundantly expressed in heart. In cardiac muscle cells, located in the Z-disks of sarcomere. Also found, but to a lower extent, in small and large intestine, pancreas, thymus, colon, spleen, prostate, testis, brain, ovary and epithelial cells. In the pancreas, mainly expressed in acinar cells, duct cells and all cell types in islets (at protein level). Tends to be down-regulated in pancreatic adenocarcinomas ans metastases.

The protein resides in the cytoplasm. It is found in the perinuclear region. It localises to the apical cell membrane. The protein localises to the cell junction. Its subcellular location is the focal adhesion. The protein resides in the cell projection. It is found in the lamellipodium. Adapter protein that plays a role in the assembling of signaling complexes, being a link between ABL kinases and actin cytoskeleton. Can form complex with ABL1 and CBL, thus promoting ubiquitination and degradation of ABL1. May play a role in the regulation of pancreatic cell adhesion, possibly by acting on WASF1 phosphorylation, enhancing phosphorylation by ABL1, as well as dephosphorylation by PTPN12. Isoform 6 increases water and sodium absorption in the intestine and gall-bladder. In Homo sapiens (Human), this protein is Sorbin and SH3 domain-containing protein 2 (SORBS2).